Reading from the N-terminus, the 439-residue chain is CBL-interacting serine/threonine-protein kinase 20 (439 aa).

A Protein kinase domain is found at 12–266 (YELGRLLGQG…IEKIMENSWF (255 aa)). ATP-binding positions include 18–26 (LGQGTFAKV) and Lys41. The Proton acceptor role is filled by Asp134. The interval 152-181 (DFGLSALRESKQQDGLLHTTCGTPAYVAPE) is activation loop. Residue Ser156 is modified to Phosphoserine. Residue Thr170 is modified to Phosphothreonine. The 26-residue stretch at 297–322 (VKPMSYNAFDLISSLSQGFDLSGLFE) folds into the NAF domain. Positions 326–356 (RSESKFTTKKDAKEIVSKFEEIATSSERFNL) are PPI.

It belongs to the protein kinase superfamily. CAMK Ser/Thr protein kinase family. SNF1 subfamily. The cofactor is Mn(2+). Post-translationally, autophosphorylated. As to expression, confined to mature leaves.

The catalysed reaction is L-seryl-[protein] + ATP = O-phospho-L-seryl-[protein] + ADP + H(+). The enzyme catalyses L-threonyl-[protein] + ATP = O-phospho-L-threonyl-[protein] + ADP + H(+). Its function is as follows. CIPK serine-threonine protein kinases interact with CBL proteins. Binding of a CBL protein to the regulatory NAF domain of CIPK protein lead to the activation of the kinase in a calcium-dependent manner. Required for the abscisic acid-mediated (ABA) signaling pathway involved in seed germination and growth elongation inhibition. The protein is CBL-interacting serine/threonine-protein kinase 20 (CIPK20) of Arabidopsis thaliana (Mouse-ear cress).